Here is a 416-residue protein sequence, read N- to C-terminus: MFSQSLTIEQVDPDLWQAIKGEVQRQEDHIELIASENYASPAVLQAQGTVLTNKYAEGYPGKRYYGGCRYVDIVEQLAIDRLRNLFNAEYVNVQPHSGSQANAAVYLSALKPGDTLLGMSLAHGGHLTHGSAVNMSGKIFNSISYGLNPETEEIDYAELERLAHEHKPRMIVAGASSYARVIDWKAFRQIADNVGAYLFVDMAHYAGLIAAGYYPNPVGIADFVTSTTHKTLRGPRGGVIMAKPEHEKALNSAVFPQTQGGPLMHVIAAKAVAFKEASSQAFKDYQKQVIENARVMARVLQQRGLRIVSGRTDCHMFLVDLRAKNLTGREAESALEAAHITVNKNAIPNDPQKPFVTSGIRIGTPAITTRGFKEPESEELANLVADVLDAPANTAVLDQVARKAQALCTKFPVYGN.

(6S)-5,6,7,8-tetrahydrofolate is bound by residues leucine 121 and 125–127 (GHL). Lysine 230 carries the post-translational modification N6-(pyridoxal phosphate)lysine.

This sequence belongs to the SHMT family. In terms of assembly, homodimer. It depends on pyridoxal 5'-phosphate as a cofactor.

It localises to the cytoplasm. The catalysed reaction is (6R)-5,10-methylene-5,6,7,8-tetrahydrofolate + glycine + H2O = (6S)-5,6,7,8-tetrahydrofolate + L-serine. It functions in the pathway one-carbon metabolism; tetrahydrofolate interconversion. The protein operates within amino-acid biosynthesis; glycine biosynthesis; glycine from L-serine: step 1/1. Catalyzes the reversible interconversion of serine and glycine with tetrahydrofolate (THF) serving as the one-carbon carrier. This reaction serves as the major source of one-carbon groups required for the biosynthesis of purines, thymidylate, methionine, and other important biomolecules. Also exhibits THF-independent aldolase activity toward beta-hydroxyamino acids, producing glycine and aldehydes, via a retro-aldol mechanism. The polypeptide is Serine hydroxymethyltransferase (Nitrosomonas europaea (strain ATCC 19718 / CIP 103999 / KCTC 2705 / NBRC 14298)).